We begin with the raw amino-acid sequence, 357 residues long: Eugenol O-methyltransferase (357 aa).

Residues G203, D226, D246, M247, and K260 each coordinate S-adenosyl-L-methionine. The Proton acceptor role is filled by H264.

The protein belongs to the class I-like SAM-binding methyltransferase superfamily. Cation-independent O-methyltransferase family. COMT subfamily. As to expression, specifically expressed in the peltate glandular trichomes on the surface of the young basil leaves.

It catalyses the reaction (E)-isoeugenol + S-adenosyl-L-methionine = (E)-isomethyleugenol + S-adenosyl-L-homocysteine + H(+). It functions in the pathway aromatic compound metabolism; phenylpropanoid biosynthesis. Its function is as follows. Phenylpropene O-methyltransferase that catalyzes the methylation of the para-4-hydroxyl of eugenol to methyleugenol. Can also convert chavicol to methylchavicol but with less affinity. This Ocimum basilicum (Sweet basil) protein is Eugenol O-methyltransferase (EOMT1).